The primary structure comprises 479 residues: Rifampicin monooxygenase (479 aa).

10 residues coordinate FAD: threonine 12, aspartate 31, lysine 32, arginine 41, glutamine 98, valine 122, threonine 156, aspartate 278, leucine 291, and asparagine 292.

This sequence belongs to the rifampicin monooxygenase family. FAD is required as a cofactor.

The enzyme catalyses rifampicin + NADPH + O2 = rifampicin para-naphthoquinone carboxamide + NADP(+) + H2O + H(+). It catalyses the reaction rifampicin + NADH + O2 = rifampicin para-naphthoquinone carboxamide + NAD(+) + H2O + H(+). In terms of biological role, monooxygenase that can modify rifampicin, thereby inactivating its antibiotic activity. The sequence is that of Rifampicin monooxygenase from Rhodococcus hoagii (Corynebacterium equii).